A 209-amino-acid chain; its full sequence is Large ribosomal subunit protein uL3 (209 aa).

A disordered region spans residues 121–154; sequence GGIKRHNFHRGPMAHGSKYHRRPGSSAAKGPART.

Belongs to the universal ribosomal protein uL3 family. Part of the 50S ribosomal subunit. Forms a cluster with proteins L14 and L19.

Functionally, one of the primary rRNA binding proteins, it binds directly near the 3'-end of the 23S rRNA, where it nucleates assembly of the 50S subunit. This Desulforamulus reducens (strain ATCC BAA-1160 / DSM 100696 / MI-1) (Desulfotomaculum reducens) protein is Large ribosomal subunit protein uL3.